We begin with the raw amino-acid sequence, 746 residues long: Ring assembly protein 3 (746 aa).

It localises to the cytoplasm. In terms of biological role, essential for actinomyosin ring assembly during cytokinesis. Has a role, in conjunction with F-actin, in assembling myosin II-containing proteins, such as myo2, at the division site. This Schizosaccharomyces pombe (strain 972 / ATCC 24843) (Fission yeast) protein is Ring assembly protein 3 (rng3).